Reading from the N-terminus, the 250-residue chain is MAGNKVETFLKSELKKKNALLFVLIDSEVSNLEASAKLAKDVEKIGASAILVGGSSATDQIEMAQVVKGIKKGIKIPIILFPGNVTGVVPDADAILFSSLMNSENPYFITQAQALGAPSVLKFGLEPLPTAYLVIGDGTTAWFVGSARGIPFEKPKIAAAYALAAQFLGMRFVYLEAGSGAKSSVTPEMVKTVRQLFNGFLIVGGGIKDVKTAQNLVKAGADALVIGTFLEKGGSLKKLEEITKAIQRSK.

Mg(2+) is bound by residues Asp-26 and Ser-55. Sn-glycerol 1-phosphate is bound by residues 174-180 (YLEAGSG), 205-206 (GG), and 227-228 (GT).

The protein belongs to the GGGP/HepGP synthase family. Group II subfamily. Mg(2+) is required as a cofactor.

It localises to the cytoplasm. The catalysed reaction is sn-glycerol 1-phosphate + (2E,6E,10E)-geranylgeranyl diphosphate = sn-3-O-(geranylgeranyl)glycerol 1-phosphate + diphosphate. It functions in the pathway membrane lipid metabolism; glycerophospholipid metabolism. Functionally, prenyltransferase that catalyzes the transfer of the geranylgeranyl moiety of geranylgeranyl diphosphate (GGPP) to the C3 hydroxyl of sn-glycerol-1-phosphate (G1P). This reaction is the first ether-bond-formation step in the biosynthesis of archaeal membrane lipids. The polypeptide is Geranylgeranylglyceryl phosphate synthase (Nitrosopumilus maritimus (strain SCM1)).